The primary structure comprises 353 residues: Phosphoribosylformylglycinamidine cyclo-ligase (353 aa).

Belongs to the AIR synthase family.

The protein resides in the cytoplasm. It catalyses the reaction 2-formamido-N(1)-(5-O-phospho-beta-D-ribosyl)acetamidine + ATP = 5-amino-1-(5-phospho-beta-D-ribosyl)imidazole + ADP + phosphate + H(+). The protein operates within purine metabolism; IMP biosynthesis via de novo pathway; 5-amino-1-(5-phospho-D-ribosyl)imidazole from N(2)-formyl-N(1)-(5-phospho-D-ribosyl)glycinamide: step 2/2. In Ralstonia nicotianae (strain ATCC BAA-1114 / GMI1000) (Ralstonia solanacearum), this protein is Phosphoribosylformylglycinamidine cyclo-ligase.